The sequence spans 360 residues: Meiosis-inducing protein 1 (360 aa).

A disordered region spans residues 102-135 (SKETKTTKDCTMATGPERGKKSSESTRSSSLSSL). Residues 126–135 (STRSSSLSSL) are compositionally biased toward low complexity.

As to quaternary structure, interacts with UME6.

The protein resides in the nucleus. Transcription factor required for sporulation and for early sporulation-specific genes expression. Positive regulator of SME1/IME2 expression. Directly activates expression of SLZ1 during meiosis. This chain is Meiosis-inducing protein 1 (IME1), found in Saccharomyces cerevisiae (strain ATCC 204508 / S288c) (Baker's yeast).